Consider the following 374-residue polypeptide: MSIDNSKTRVVVGMSGGVDSSVTALLLKEQGYDVIGIFMKNWDDTDENGFCTATEDYKDVAAVADQIGIPYYSVNFEKEYWDRVFEYFLAEYRAGRTPNPDVMCNKEIKFKAFLDYAMNLGADYVATGHYAQVTRDEDGTVHMLRGADNGKDQTYFLSQLSQEQLQKTMFPLGHLQKPQVREIAERAGLATAKKKDSTGICFIGEKNFKEFLGQYLPAQPGRMMTVDGRDMGEHTGLMYYTIGQRGGLGIGGQIGGDNEPWFVVGKDLSKNILYVGQGFYHESLMSTSLQASQVHFTRDMPEEFTLECTAKFRYRQPDSQVTVKVKGDKAEVIFAEPQRAITPGQAVVFYDGQECLGGGMIDMAYKDGEACQYI.

Residues 13 to 20 and Met-39 each bind ATP; that span reads GMSGGVDS. An interaction with target base in tRNA region spans residues 99–101; sequence NPD. Residue Cys-104 is the Nucleophile of the active site. Cys-104 and Cys-201 form a disulfide bridge. Gly-128 contacts ATP. The tract at residues 151 to 153 is interaction with tRNA; the sequence is KDQ. Cys-201 acts as the Cysteine persulfide intermediate in catalysis. The interval 313–314 is interaction with tRNA; the sequence is RY.

This sequence belongs to the MnmA/TRMU family.

The protein resides in the cytoplasm. The catalysed reaction is S-sulfanyl-L-cysteinyl-[protein] + uridine(34) in tRNA + AH2 + ATP = 2-thiouridine(34) in tRNA + L-cysteinyl-[protein] + A + AMP + diphosphate + H(+). Its function is as follows. Catalyzes the 2-thiolation of uridine at the wobble position (U34) of tRNA, leading to the formation of s(2)U34. The chain is tRNA-specific 2-thiouridylase MnmA from Streptococcus suis (strain 98HAH33).